The sequence spans 476 residues: MRSFLLILFCVSLLTGCQGERVDAAKAVETQPKTQLNVGTLYGAQIYVTTGQGLAGFDYEMAERFAKHQGLTLNMQPYPTISDLYQAMRNGEIDLIAAGLADTQSRREQFRLGPPLYYVNQVLVYKQGAKYPTDVSQLDDNITVISDSSFIETLAEMQKLYPELVWDQQWDKDSEELLAMIARDEISYTIADSTTFEINRRYMPELRAGPVLREGQAVVWLLPPNGSDQLMSDLLSFWHQEKRAGTLAHLNEKYFAHVKRFDYVDTRAFLRAIDSRLPKYRDNFVEYAGDLDWRKLAATAYQESHWNPNARSPTGVRGMMMLTLPTAKQMGIDNRLDPEQSIRGGAKYLSDILNRLPESIPENQRMWFALASYNIGYGHVEDARKLAQSMGLNPSAWRDLKKVLPLLQKRKYYKQTRYGYARGSEAVHYVDNIRRYYDTLVWIDNQNQQLQDEVMEAQQQTAEKQSQSEISAAQPN.

An N-terminal signal peptide occupies residues 1 to 15 (MRSFLLILFCVSLLT). The segment at 16–258 (GCQGERVDAA…HLNEKYFAHV (243 aa)) is non-LT domain. An LT domain region spans residues 259–476 (KRFDYVDTRA…QSEISAAQPN (218 aa)). The active site involves E303. A disordered region spans residues 456 to 476 (EAQQQTAEKQSQSEISAAQPN).

It in the N-terminal section; belongs to the bacterial solute-binding protein 3 family. This sequence in the C-terminal section; belongs to the transglycosylase Slt family.

It localises to the cell outer membrane. The catalysed reaction is Exolytic cleavage of the (1-&gt;4)-beta-glycosidic linkage between N-acetylmuramic acid (MurNAc) and N-acetylglucosamine (GlcNAc) residues in peptidoglycan, from either the reducing or the non-reducing ends of the peptidoglycan chains, with concomitant formation of a 1,6-anhydrobond in the MurNAc residue.. Murein-degrading enzyme that degrades murein glycan strands and insoluble, high-molecular weight murein sacculi, with the concomitant formation of a 1,6-anhydromuramoyl product. Lytic transglycosylases (LTs) play an integral role in the metabolism of the peptidoglycan (PG) sacculus. Their lytic action creates space within the PG sacculus to allow for its expansion as well as for the insertion of various structures such as secretion systems and flagella. The chain is Membrane-bound lytic murein transglycosylase F from Shewanella loihica (strain ATCC BAA-1088 / PV-4).